We begin with the raw amino-acid sequence, 388 residues long: Succinate--CoA ligase [ADP-forming] subunit beta (388 aa).

One can recognise an ATP-grasp domain in the interval 9-236 (KKLFAEHGVP…VAAVDPLEQK (228 aa)). ATP-binding positions include lysine 45, 52-54 (GRG), glutamate 91, serine 94, and glutamate 99. Mg(2+) contacts are provided by asparagine 191 and aspartate 205. Substrate is bound by residues asparagine 256 and 318-320 (GIT).

It belongs to the succinate/malate CoA ligase beta subunit family. Heterotetramer of two alpha and two beta subunits. It depends on Mg(2+) as a cofactor.

It catalyses the reaction succinate + ATP + CoA = succinyl-CoA + ADP + phosphate. It carries out the reaction GTP + succinate + CoA = succinyl-CoA + GDP + phosphate. Its pathway is carbohydrate metabolism; tricarboxylic acid cycle; succinate from succinyl-CoA (ligase route): step 1/1. Its function is as follows. Succinyl-CoA synthetase functions in the citric acid cycle (TCA), coupling the hydrolysis of succinyl-CoA to the synthesis of either ATP or GTP and thus represents the only step of substrate-level phosphorylation in the TCA. The beta subunit provides nucleotide specificity of the enzyme and binds the substrate succinate, while the binding sites for coenzyme A and phosphate are found in the alpha subunit. In Parafrankia sp. (strain EAN1pec), this protein is Succinate--CoA ligase [ADP-forming] subunit beta.